Here is a 1258-residue protein sequence, read N- to C-terminus: Cohesin subunit SA-1 (1258 aa).

Residues 1-84 (MITSELPVLQ…HPQQNGEGEP (84 aa)) are disordered. Over residues 10–19 (QDSTNETTAH) the composition is skewed to polar residues. Ser-24 carries the phosphoserine modification. Residues 53-62 (SPGEKSRIEA) are compositionally biased toward basic and acidic residues. The region spanning 296–381 (FVHRYRDAIA…NRFKDRIVSM (86 aa)) is the SCD domain. A phosphoserine mark is found at Ser-756, Ser-1062, and Ser-1065. Disordered stretches follow at residues 1055 to 1096 (GGED…SLDN) and 1129 to 1148 (MGDQ…DFLH). Over residues 1062–1074 (SVNSGSSSSKTSS) the composition is skewed to low complexity. Basic residues predominate over residues 1076–1087 (RNKKGRPPLHKK). Position 1093 is a phosphoserine (Ser-1093). Residues 1137 to 1146 (ESEHGSEPDF) are compositionally biased toward basic and acidic residues. Lys-1161 participates in a covalent cross-link: Glycyl lysine isopeptide (Lys-Gly) (interchain with G-Cter in SUMO2).

The protein belongs to the SCC3 family. Cohesin complexes are composed of a heterodimer between a SMC1 protein (SMC1A or SMC1B) and SMC3, which are attached via their hinge domain, and RAD21 which link them at their heads, and one STAG protein (STAG1, STAG2 or STAG3). In cohesin complexes, STAG1 is mutually exclusive with STAG2 and STAG3. Interacts directly with RAD21 in cohesin complex. The cohesin complex interacts with the cohesin loading complex subunits NIPBL/Scc2 (via HEAT repeats) and MAU2/Scc4. NIPBL directly contacts all members of the complex, RAD21, SMC1A/B, SMC3 and STAG1. In terms of processing, phosphorylated by PLK1. The large dissociation of cohesin from chromosome arms during prophase is partly due to its phosphorylation.

The protein localises to the nucleus. It is found in the chromosome. The protein resides in the centromere. Its function is as follows. Component of cohesin complex, a complex required for the cohesion of sister chromatids after DNA replication. The cohesin complex apparently forms a large proteinaceous ring within which sister chromatids can be trapped. At anaphase, the complex is cleaved and dissociates from chromatin, allowing sister chromatids to segregate. The cohesin complex may also play a role in spindle pole assembly during mitosis. In Homo sapiens (Human), this protein is Cohesin subunit SA-1 (STAG1).